Here is a 233-residue protein sequence, read N- to C-terminus: Tropomyosin (233 aa).

The stretch at 6–222 forms a coiled coil; it reads FDTVNEKYQE…KERYKAISDE (217 aa). The segment at 48–88 is disordered; it reads MERSEERLQTATEKLEEASKAADESERNRKVLENLNNASEE. The segment covering 51–79 has biased composition (basic and acidic residues); sequence SEERLQTATEKLEEASKAADESERNRKVL.

Belongs to the tropomyosin family. In terms of assembly, homodimer.

Functionally, tropomyosin, in association with the troponin complex, plays a central role in the calcium dependent regulation of muscle contraction. The polypeptide is Tropomyosin (Magallana gigas (Pacific oyster)).